Consider the following 335-residue polypeptide: tRNA N6-adenosine threonylcarbamoyltransferase (335 aa).

Positions 109, 113, and 130 each coordinate a divalent metal cation. Substrate contacts are provided by residues 130-134 (YVSGG), Asp162, Gly177, Glu181, and Asn266. Asp294 serves as a coordination point for a divalent metal cation.

Belongs to the KAE1 / TsaD family. As to quaternary structure, component of the EKC/KEOPS complex composed of at least tp53rk, tprkb, osgep and lage3; the whole complex dimerizes. A divalent metal cation serves as cofactor.

It localises to the cytoplasm. The protein resides in the nucleus. The enzyme catalyses L-threonylcarbamoyladenylate + adenosine(37) in tRNA = N(6)-L-threonylcarbamoyladenosine(37) in tRNA + AMP + H(+). Component of the EKC/KEOPS complex that is required for the formation of a threonylcarbamoyl group on adenosine at position 37 (t(6)A37) in tRNAs that read codons beginning with adenine. The complex is probably involved in the transfer of the threonylcarbamoyl moiety of threonylcarbamoyl-AMP (TC-AMP) to the N6 group of A37. OSGEP likely plays a direct catalytic role in this reaction, but requires other protein(s) of the complex to fulfill this activity. The sequence is that of tRNA N6-adenosine threonylcarbamoyltransferase from Danio rerio (Zebrafish).